The chain runs to 315 residues: Atrochrysone carboxyl ACP thioesterase (315 aa).

Zn(2+) is bound by residues H95, H97, D99, and H100. D99 serves as the catalytic Proton donor/acceptor.

Belongs to the metallo-beta-lactamase superfamily. Zn(2+) serves as cofactor. Endocrocin is specifically produced in conidia.

It carries out the reaction atrochrysone carboxyl-[ACP] + H2O = atrochrysone carboxylate + holo-[ACP] + H(+). Its function is as follows. Atrochrysone carboxyl ACP thioesterase; part of the gene cluster that mediates the biosynthesis of endocrocin, a simple anthraquinone interesting for many biotechnological applications. The pathway begins with the synthesis of atrochrysone thioester by the polyketide synthase (PKS) encA. The atrochrysone carboxyl ACP thioesterase encB then breaks the thioester bond and releases the atrochrysone carboxylic acid from encA. The atrochrysone carboxylic acid is then converted to endocrocin anthrone which is further oxidized into endocrocin by the anthrone oxygenase encC. The exact function of encD has not been identified yet, but it negatively regulates endocrocin production, likely through the modification of endocrocin itself. The sequence is that of Atrochrysone carboxyl ACP thioesterase from Aspergillus fumigatus (strain ATCC MYA-4609 / CBS 101355 / FGSC A1100 / Af293) (Neosartorya fumigata).